The sequence spans 1988 residues: MAMLPPPGPQSFVHFTKQSLALIEQRIAERKSKEPKEEKKDDDEEAPKPSSDLEAGKQLPFIYGDIPPGMVSEPLEDLDPYYADKKTFIVLNKGKTIFRFNATPALYMLSPFSPLRRISIKILVHSLFSMLIMCTILTNCIFMTMNNPPDWTKNVEYTFTGIYTFESLVKILARGFCVGEFTFLRDPWNWLDFVVIVFAYLTEFVNLGNVSALRTFRVLRALKTISVIPGLKTIVGALIQSVKKLSDVMILTVFCLSVFALIGLQLFMGNLKHKCFRNSLENNETLESIMNTLESEEDFRKYFYYLEGSKDALLCGFSTDSGQCPEGYTCVKIGRNPDYGYTSFDTFSWAFLALFRLMTQDYWENLYQQTLRAAGKTYMIFFVVVIFLGSFYLINLILAVVAMAYEEQNQANIEEAKQKELEFQQMLDRLKKEQEEAEAIAAAAAEYTSIRRSRIMGLSESSSETSKLSSKSAKERRNRRKKKNQKKLSSGEEKGDAEKLSKSESEDSIRRKSFHLGVEGHRRAHEKRLSTPNQSPLSIRGSLFSARRSSRTSLFSFKGRGRDIGSETEFADDEHSIFGDNESRRGSLFVPHRPQERRSSNISQASRSPPMLPVNGKMHSAVDCNGVVSLVDGRSALMLPNGQLLPEVIIDKATSDDSGTTNQIHKKRRCSSYLLSEDMLNDPNLRQRAMSRASILTNTVEELEESRQKCPPWWYRFAHKFLIWNCSPYWIKFKKCIYFIVMDPFVDLAITICIVLNTLFMAMEHHPMTEEFKNVLAIGNLVFTGIFAAEMVLKLIAMDPYEYFQVGWNIFDSLIVTLSLVELFLADVEGLSVLRSFRLLRVFKLAKSWPTLNMLIKIIGNSVGALGNLTLVLAIIVFIFAVVGMQLFGKSYKECVCKINDDCTLPRWHMNDFFHSFLIVFRVLCGEWIETMWDCMEVAGQAMCLIVYMMVMVIGNLVVLNLFLALLLSSFSSDNLTAIEEDPDANNLQIAVTRIKKGINYVKQTLREFILKAFSKKPKISREIRQAEDLNTKKENYISNHTLAEMSKGHNFLKEKDKISGFGSSVDKHLMEDSDGQSFIHNPSLTVTVPIAPGESDLENMNAEELSSDSDSEYSKVRLNRSSSSECSTVDNPLPGEGEEAEAEPMNSDEPEACFTDGCVWRFSCCQVNIESGKGKIWWNIRKTCYKIVEHSWFESFIVLMILLSSGALAFEDIYIERKKTIKIILEYADKIFTYIFILEMLLKWIAYGYKTYFTNAWCWLDFLIVDVSLVTLVANTLGYSDLGPIKSLRTLRALRPLRALSRFEGMRVVVNALIGAIPSIMNVLLVCLIFWLIFSIMGVNLFAGKFYECINTTDGSRFPASQVPNRSECFALMNVSQNVRWKNLKVNFDNVGLGYLSLLQVATFKGWTIIMYAAVDSVNVDKQPKYEYSLYMYIYFVVFIIFGSFFTLNLFIGVIIDNFNQQKKKLGGQDIFMTEEQKKYYNAMKKLGSKKPQKPIPRPGNKIQGCIFDLVTNQAFDISIMVLICLNMVTMMVEKEGQSQHMTEVLYWINVVFIILFTGECVLKLISLRHYYFTVGWNIFDFVVVIISIVGMFLADLIETYFVSPTLFRVIRLARIGRILRLVKGAKGIRTLLFALMMSLPALFNIGLLLFLVMFIYAIFGMSNFAYVKKEDGINDMFNFETFGNSMICLFQITTSAGWDGLLAPILNSKPPDCDPKKVHPGSSVEGDCGNPSVGIFYFVSYIIISFLVVVNMYIAVILENFSVATEESTEPLSEDDFEMFYEVWEKFDPDATQFIEFSKLSDFAAALDPPLLIAKPNKVQLIAMDLPMVSGDRIHCLDILFAFTKRVLGESGEMDSLRSQMEERFMSANPSKVSYEPITTTLKRKQEDVSATVIQRAYRRYRLRQNVKNISSIYIKDGDRDDDLLNKKDMAFDNVNENSSPEKTDATSSTTSPPSYDSVTKPDKEKYEQDRTEKEDKGKDSKESKK.

Residues 1-125 (MAMLPPPGPQ…RRISIKILVH (125 aa)) are Cytoplasmic-facing. Residues 26–39 (RIAERKSKEPKEEK) show a composition bias toward basic and acidic residues. Residues 26–55 (RIAERKSKEPKEEKKDDDEEAPKPSSDLEA) form a disordered region. Residues 112 to 410 (FSPLRRISIK…VAMAYEEQNQ (299 aa)) form an I repeat. Residues 126-145 (SLFSMLIMCTILTNCIFMTM) traverse the membrane as a helical segment. Residues 146–150 (NNPPD) lie on the Extracellular side of the membrane. Residues 151 to 172 (WTKNVEYTFTGIYTFESLVKIL) form a helical membrane-spanning segment. Residues 173 to 185 (ARGFCVGEFTFLR) are Cytoplasmic-facing. The chain crosses the membrane as a helical span at residues 186–204 (DPWNWLDFVVIVFAYLTEF). Topologically, residues 205 to 210 (VNLGNV) are extracellular. A glycan (N-linked (GlcNAc...) asparagine) is linked at N209. Residues 211–227 (SALRTFRVLRALKTISV) traverse the membrane as a helical segment. Over 228 to 241 (IPGLKTIVGALIQS) the chain is Cytoplasmic. The chain crosses the membrane as a helical span at residues 242-267 (VKKLSDVMILTVFCLSVFALIGLQLF). Residues 268-346 (MGNLKHKCFR…PDYGYTSFDT (79 aa)) lie on the Extracellular side of the membrane. An intrachain disulfide couples C275 to C324. The N-linked (GlcNAc...) asparagine glycan is linked to N283. An intramembrane region (pore-forming) is located at residues 347-363 (FSWAFLALFRLMTQDYW). Over 364 to 376 (ENLYQQTLRAAGK) the chain is Extracellular. A helical membrane pass occupies residues 377–402 (TYMIFFVVVIFLGSFYLINLILAVVA). The Cytoplasmic portion of the chain corresponds to 403–745 (MAYEEQNQAN…CIYFIVMDPF (343 aa)). Over residues 461–471 (SSSETSKLSSK) the composition is skewed to low complexity. 2 disordered regions span residues 461–543 (SSSE…RGSL) and 565–611 (GSET…SPPM). Basic residues predominate over residues 474 to 486 (KERRNRRKKKNQK). Basic and acidic residues-rich tracts occupy residues 489–510 (SSGE…DSIR) and 573–585 (DEHS…ESRR). The stretch at 726-989 (CSPYWIKFKK…EEDPDANNLQ (264 aa)) is one II repeat. Residues 746-762 (VDLAITICIVLNTLFMA) traverse the membrane as a helical segment. The Extracellular segment spans residues 763–771 (MEHHPMTEE). The helical transmembrane segment at 772–796 (FKNVLAIGNLVFTGIFAAEMVLKLI) threads the bilayer. Residues 797–805 (AMDPYEYFQ) lie on the Cytoplasmic side of the membrane. The helical transmembrane segment at 806–822 (VGWNIFDSLIVTLSLVE) threads the bilayer. Residues 823-831 (LFLADVEGL) lie on the Extracellular side of the membrane. A helical transmembrane segment spans residues 832–848 (SVLRSFRLLRVFKLAKS). At 849-865 (WPTLNMLIKIIGNSVGA) the chain is on the cytoplasmic side. The chain crosses the membrane as a helical span at residues 866–888 (LGNLTLVLAIIVFIFAVVGMQLF). Topologically, residues 889–915 (GKSYKECVCKINDDCTLPRWHMNDFFH) are extracellular. An intrachain disulfide couples C897 to C903. The segment at residues 916–928 (SFLIVFRVLCGEW) is an intramembrane region (pore-forming). Over 929 to 940 (IETMWDCMEVAG) the chain is Extracellular. An intrachain disulfide couples C935 to C944. A helical membrane pass occupies residues 941-967 (QAMCLIVYMMVMVIGNLVVLNLFLALL). Over 968 to 1187 (LSSFSSDNLT…WWNIRKTCYK (220 aa)) the chain is Cytoplasmic. The interval 1102-1148 (NAEELSSDSDSEYSKVRLNRSSSSECSTVDNPLPGEGEEAEAEPMNS) is disordered. The span at 1120 to 1131 (NRSSSSECSTVD) shows a compositional bias: polar residues. Positions 1137–1148 (EGEEAEAEPMNS) are enriched in acidic residues. The stretch at 1180-1488 (NIRKTCYKIV…KKYYNAMKKL (309 aa)) is one III repeat. A helical transmembrane segment spans residues 1188–1212 (IVEHSWFESFIVLMILLSSGALAFE). Over 1213–1224 (DIYIERKKTIKI) the chain is Extracellular. A helical transmembrane segment spans residues 1225–1250 (ILEYADKIFTYIFILEMLLKWIAYGY). The Cytoplasmic portion of the chain corresponds to 1251–1252 (KT). Residues 1253 to 1278 (YFTNAWCWLDFLIVDVSLVTLVANTL) form a helical membrane-spanning segment. Residues 1279–1287 (GYSDLGPIK) are Extracellular-facing. A helical membrane pass occupies residues 1288–1304 (SLRTLRALRPLRALSRF). Residues 1305–1317 (EGMRVVVNALIGA) are Cytoplasmic-facing. A helical membrane pass occupies residues 1318-1342 (IPSIMNVLLVCLIFWLIFSIMGVNL). Topologically, residues 1343–1394 (FAGKFYECINTTDGSRFPASQVPNRSECFALMNVSQNVRWKNLKVNFDNVGL) are extracellular. Residues C1350 and C1370 are joined by a disulfide bond. N-linked (GlcNAc...) asparagine glycosylation is found at N1352, N1366, and N1375. The segment at residues 1395-1405 (GYLSLLQVATF) is an intramembrane region (pore-forming). Topologically, residues 1406-1431 (KGWTIIMYAAVDSVNVDKQPKYEYSL) are extracellular. The chain crosses the membrane as a helical span at residues 1432–1457 (YMYIYFVVFIIFGSFFTLNLFIGVII). Over 1458–1514 (DNFNQQKKKLGGQDIFMTEEQKKYYNAMKKLGSKKPQKPIPRPGNKIQGCIFDLVTN) the chain is Cytoplasmic. S1490 is subject to Phosphoserine; by PKC. The stretch at 1497–1795 (IPRPGNKIQG…WEKFDPDATQ (299 aa)) is one IV repeat. The helical transmembrane segment at 1515-1534 (QAFDISIMVLICLNMVTMMV) threads the bilayer. At 1535–1545 (EKEGQSQHMTE) the chain is on the extracellular side. The helical transmembrane segment at 1546–1567 (VLYWINVVFIILFTGECVLKLI) threads the bilayer. The Cytoplasmic portion of the chain corresponds to 1568–1576 (SLRHYYFTV). Residues 1577–1598 (GWNIFDFVVVIISIVGMFLADL) form a helical membrane-spanning segment. The Extracellular portion of the chain corresponds to 1599-1607 (IETYFVSPT). Residues 1608–1627 (LFRVIRLARIGRILRLVKGA) form a helical membrane-spanning segment. The Cytoplasmic segment spans residues 1628 to 1640 (KGIRTLLFALMMS). Residues 1641-1663 (LPALFNIGLLLFLVMFIYAIFGM) traverse the membrane as a helical segment. Over 1664–1686 (SNFAYVKKEDGINDMFNFETFGN) the chain is Extracellular. The segment at residues 1687 to 1699 (SMICLFQITTSAG) is an intramembrane region (pore-forming). Residues 1700 to 1733 (WDGLLAPILNSKPPDCDPKKVHPGSSVEGDCGNP) lie on the Extracellular side of the membrane. C1715 and C1730 are oxidised to a cystine. Residues 1734–1759 (SVGIFYFVSYIIISFLVVVNMYIAVI) traverse the membrane as a helical segment. Residues 1760-1988 (LENFSVATEE…KGKDSKESKK (229 aa)) are Cytoplasmic-facing. Residues 1889 to 1918 (EDVSATVIQRAYRRYRLRQNVKNISSIYIK) enclose the IQ domain. Residues 1934–1988 (FDNVNENSSPEKTDATSSTTSPPSYDSVTKPDKEKYEQDRTEKEDKGKDSKESKK) form a disordered region. The span at 1948 to 1961 (ATSSTTSPPSYDSV) shows a compositional bias: low complexity. Residues 1962 to 1988 (TKPDKEKYEQDRTEKEDKGKDSKESKK) are compositionally biased toward basic and acidic residues.

Belongs to the sodium channel (TC 1.A.1.10) family. Nav1.7/SCN9A subfamily. The Nav1.7 voltage-gated sodium channel consists of an ion-conducting alpha subunit SCN9A which is functional on its own regulated by one or more beta-1 (SCN1B), beta-2 (SCN2B), beta-3 (SCN3B) and beta-4 (SCN4B) subunits. SCN1B and SCN3B are non-covalently associated with SCN9A. SCN2B and SCN4B are disulfide-linked to SCN9A. SCN1B regulates channel inactivation. Interacts with NEDD4 and NEDD4L; regulates Nav1.7 activity most probably through ubiquitination and subsequent endocytosis. Interacts with TMEM233; modulates the gating properties of NaV1.7. Phosphorylation at Ser-1490 by PKC in a highly conserved cytoplasmic loop increases peak sodium currents. Post-translationally, ubiquitinated by NEDD4L; which may promote its endocytosis. As to expression, expressed strongly in dorsal root ganglion, with only minor levels elsewhere in the body, smooth muscle cells, MTC cell line and C-cell carcinoma. Also expressed in vagus nerves within the head and neck region. Isoform 1 is expressed preferentially in the central and peripheral nervous system. Isoform 2 is expressed preferentially in the dorsal root ganglion.

It is found in the cell membrane. The protein localises to the cell projection. Its subcellular location is the neuron projection. The protein resides in the axon. It carries out the reaction Na(+)(in) = Na(+)(out). Its activity is regulated as follows. Inhibited by tetrodotoxin. Weakly inhibited by saxitoxin. Inhibited by the spider huwentoxin-IV that binds the extracellular loop S3-S4 of repeat II. Inhibited by the spider protoxin-II that binds the extracellular loop S3-S4 of repeats II and IV. Inhibited by the scorpion alpha-toxins CvIV4 and AaH2. Inhibited by the conotoxin GVIIJ. Inhibited by the spider beta/delta-theraphotoxin-Pre1a. In terms of biological role, pore-forming subunit of Nav1.7, a voltage-gated sodium (Nav) channel that directly mediates the depolarizing phase of action potentials in excitable membranes. Navs, also called VGSCs (voltage-gated sodium channels) or VDSCs (voltage-dependent sodium channels), operate by switching between closed and open conformations depending on the voltage difference across the membrane. In the open conformation they allow Na(+) ions to selectively pass through the pore, along their electrochemical gradient. The influx of Na(+) ions provokes membrane depolarization, initiating the propagation of electrical signals throughout cells and tissues. Nav1.7 plays a crucial role in controlling the excitability and action potential propagation from nociceptor neurons, thereby contributing to the sensory perception of pain. This chain is Sodium channel protein type 9 subunit alpha, found in Homo sapiens (Human).